The primary structure comprises 384 residues: Cell division protein FtsZ (384 aa).

Residues 20-24 (GGGGN), 107-109 (GTG), Glu138, Arg142, and Asn186 contribute to the GTP site.

This sequence belongs to the FtsZ family. In terms of assembly, homodimer. Polymerizes to form a dynamic ring structure in a strictly GTP-dependent manner. Interacts directly with several other division proteins.

It is found in the cytoplasm. Functionally, essential cell division protein that forms a contractile ring structure (Z ring) at the future cell division site. The regulation of the ring assembly controls the timing and the location of cell division. One of the functions of the FtsZ ring is to recruit other cell division proteins to the septum to produce a new cell wall between the dividing cells. Binds GTP and shows GTPase activity. The chain is Cell division protein FtsZ from Wigglesworthia glossinidia brevipalpis.